The chain runs to 137 residues: Nucleoside diphosphate kinase (137 aa).

Positions 9, 57, 85, 91, 102, and 112 each coordinate ATP. His-115 (pros-phosphohistidine intermediate) is an active-site residue.

It belongs to the NDK family. Homotetramer. The cofactor is Mg(2+).

The protein localises to the cytoplasm. The enzyme catalyses a 2'-deoxyribonucleoside 5'-diphosphate + ATP = a 2'-deoxyribonucleoside 5'-triphosphate + ADP. It catalyses the reaction a ribonucleoside 5'-diphosphate + ATP = a ribonucleoside 5'-triphosphate + ADP. In terms of biological role, major role in the synthesis of nucleoside triphosphates other than ATP. The ATP gamma phosphate is transferred to the NDP beta phosphate via a ping-pong mechanism, using a phosphorylated active-site intermediate. The chain is Nucleoside diphosphate kinase from Campylobacter concisus (strain 13826).